Here is a 275-residue protein sequence, read N- to C-terminus: Phosphonoacetaldehyde hydrolase (275 aa).

Catalysis depends on D15, which acts as the Nucleophile. Mg(2+)-binding residues include D15 and A17. K56 (schiff-base intermediate with substrate) is an active-site residue. Mg(2+) is bound at residue D189.

It belongs to the HAD-like hydrolase superfamily. PhnX family. Homodimer. The cofactor is Mg(2+).

The catalysed reaction is phosphonoacetaldehyde + H2O = acetaldehyde + phosphate + H(+). Its function is as follows. Involved in phosphonate degradation. The chain is Phosphonoacetaldehyde hydrolase from Pseudomonas fluorescens (strain SBW25).